We begin with the raw amino-acid sequence, 292 residues long: CCR4-NOT transcription complex subunit 8 (292 aa).

A divalent metal cation contacts are provided by Asp-40, Glu-42, Asp-161, and Asp-230.

The protein belongs to the CAF1 family. Component of the CCR4-NOT complex; distinct complexes seem to exist that differ in the participation of probably mutually exclusive catalytic subunits; the complex contains two deadenylase subunits, CNOT6 or CNOT6L, and CNOT7 or CNOT8. In the complex interacts directly with CNOT1. Interacts with BTG1, BTG2 and TOB1. Interacts with BTG4.

Its subcellular location is the cytoplasm. It localises to the nucleus. The enzyme catalyses Exonucleolytic cleavage of poly(A) to 5'-AMP.. Has 3'-5' poly(A) exoribonuclease activity for synthetic poly(A) RNA substrate. Its function seems to be partially redundant with that of CNOT7. Catalytic component of the CCR4-NOT complex which is linked to various cellular processes including bulk mRNA degradation, miRNA-mediated repression, translational repression during translational initiation and general transcription regulation. During miRNA-mediated repression the complex also seems to act as translational repressor during translational initiation. Additional complex functions may be a consequence of its influence on mRNA expression. Associates with members of the BTG family such as TOB1 and BTG2 and is required for their anti-proliferative activity. This is CCR4-NOT transcription complex subunit 8 (Cnot8) from Mus musculus (Mouse).